The primary structure comprises 86 residues: Large ribosomal subunit protein bL27 (86 aa).

Residues 1 to 22 (MATKKAGGSSRNGRDSAGRRLG) form a disordered region.

This sequence belongs to the bacterial ribosomal protein bL27 family.

The sequence is that of Large ribosomal subunit protein bL27 from Rickettsia peacockii (strain Rustic).